Here is a 218-residue protein sequence, read N- to C-terminus: Glutathione S-transferase (218 aa).

In terms of domain architecture, GST N-terminal spans 3 to 88; the sequence is SKPVLGYWDI…YIGRKYKLTG (86 aa). Glutathione contacts are provided by residues 9-10, 43-46, lysine 50, 59-60, and 72-73; these read YW, RSAW, NL, and QT. The GST C-terminal domain maps to 90 to 206; it reads NEPEELRVSL…YIKAQQPKLF (117 aa). Residue tyrosine 116 coordinates substrate.

This sequence belongs to the GST superfamily. Mu family.

The enzyme catalyses RX + glutathione = an S-substituted glutathione + a halide anion + H(+). In terms of biological role, conjugation of reduced glutathione to a wide number of exogenous and endogenous hydrophobic electrophiles. The polypeptide is Glutathione S-transferase (Tyrophagus putrescentiae (Mold mite)).